The primary structure comprises 211 residues: MCPGNWLWASMTFMARFSRSSSRSPVRTRGSLEEMPSVHHPFLNVFELERLLYTGKTACNHADEVWPGLYLGDQDMANNRRELRRLGITHVLNASHSRWRGTPEAYEGLGIRYLGVEAHDSPAFDMSVHFQTAADFIHRALSQPGGKILVHCAVGVSRSATLVLAYLMLYHHFTLVEAIKKVKDHRGIIPNRGFLRQLLALDRRLRQGLEA.

The 148-residue stretch at 60 to 207 (NHADEVWPGL…LLALDRRLRQ (148 aa)) folds into the Tyrosine-protein phosphatase domain. C152 serves as the catalytic Phosphocysteine intermediate.

This sequence belongs to the protein-tyrosine phosphatase family. Non-receptor class dual specificity subfamily. In terms of assembly, interacts with HSF4.

It is found in the cytoplasm. Its subcellular location is the nucleus. The protein localises to the golgi apparatus. The enzyme catalyses O-phospho-L-tyrosyl-[protein] + H2O = L-tyrosyl-[protein] + phosphate. The catalysed reaction is O-phospho-L-seryl-[protein] + H2O = L-seryl-[protein] + phosphate. It carries out the reaction O-phospho-L-threonyl-[protein] + H2O = L-threonyl-[protein] + phosphate. Its function is as follows. Inactivates MAPK1 and MAPK3 which leads to dephosphorylation of heat shock factor protein 4 and a reduction in its DNA-binding activity. This is Dual specificity protein phosphatase 26 (Dusp26) from Rattus norvegicus (Rat).